The sequence spans 309 residues: Protease HtpX homolog (309 aa).

2 helical membrane-spanning segments follow: residues 7–27 (AILL…IGGA) and 28–48 (SGAM…YWNS). Zn(2+) is bound at residue His-130. Residue Glu-131 is part of the active site. His-134 lines the Zn(2+) pocket. 2 helical membrane-spanning segments follow: residues 145-165 (VTAT…FFGG) and 173-193 (GLGV…AMLV). Zn(2+) is bound at residue Glu-202.

It belongs to the peptidase M48B family. It depends on Zn(2+) as a cofactor.

The protein resides in the cell inner membrane. The polypeptide is Protease HtpX homolog (Rhodopseudomonas palustris (strain BisA53)).